The primary structure comprises 264 residues: 3-methyl-2-oxobutanoate hydroxymethyltransferase (264 aa).

Positions 45 and 84 each coordinate Mg(2+). 3-methyl-2-oxobutanoate contacts are provided by residues 45-46 (DS), Asp-84, and Lys-112. Glu-114 provides a ligand contact to Mg(2+). Glu-181 (proton acceptor) is an active-site residue.

The protein belongs to the PanB family. As to quaternary structure, homodecamer; pentamer of dimers. It depends on Mg(2+) as a cofactor.

Its subcellular location is the cytoplasm. It catalyses the reaction 3-methyl-2-oxobutanoate + (6R)-5,10-methylene-5,6,7,8-tetrahydrofolate + H2O = 2-dehydropantoate + (6S)-5,6,7,8-tetrahydrofolate. It participates in cofactor biosynthesis; (R)-pantothenate biosynthesis; (R)-pantoate from 3-methyl-2-oxobutanoate: step 1/2. In terms of biological role, catalyzes the reversible reaction in which hydroxymethyl group from 5,10-methylenetetrahydrofolate is transferred onto alpha-ketoisovalerate to form ketopantoate. This chain is 3-methyl-2-oxobutanoate hydroxymethyltransferase, found in Shigella sonnei (strain Ss046).